The following is a 160-amino-acid chain: uncharacterized protein (160 aa).

Residues 137–157 (YNILFVVVILLLLFVAWRCYV) traverse the membrane as a helical segment.

The protein localises to the host membrane. Its subcellular location is the virion. This is an uncharacterized protein from Acanthamoeba polyphaga mimivirus (APMV).